A 149-amino-acid chain; its full sequence is Calmodulin (149 aa).

Ala-2 bears the N-acetylalanine mark. EF-hand domains follow at residues 8–43 (EQIA…LGQN), 44–79 (PTEA…KMKE), 81–116 (DSEE…LGEK), and 117–149 (LTDD…MVSK). Position 14 is an N6,N6-dimethyllysine (Lys-14). Ca(2+) contacts are provided by Asp-21, Asp-23, Asp-25, Thr-27, Glu-32, Asp-57, Asp-59, Asn-61, Thr-63, Glu-68, Asp-94, Asp-96, Asn-98, and Glu-105. N6,N6,N6-trimethyllysine is present on Lys-116. Ca(2+)-binding residues include Asp-130, Asp-132, Asp-134, His-136, and Glu-141.

It belongs to the calmodulin family. The pantophobiac mutant CAM2 is undermethylated on Lys-116.

Its function is as follows. Calmodulin mediates the control of a large number of enzymes, ion channels and other proteins by Ca(2+). Among the enzymes to be stimulated by the calmodulin-Ca(2+) complex are a number of protein kinases and phosphatases. This chain is Calmodulin (CAM), found in Paramecium tetraurelia.